A 662-amino-acid chain; its full sequence is Chaperone protein HtpG (662 aa).

Positions 1–352 (MSKQTLSFQA…SADLPLNVSR (352 aa)) are a; substrate-binding. Residues 353–594 (ELLQESRDVR…GDGMSTQLAR (242 aa)) are b. The disordered stretch occupies residues 382–402 (HDRHDSPAPQPAEGADRVSDV). A c region spans residues 595-662 (LLKQAGQQAP…YVKRVNALLV (68 aa)).

It belongs to the heat shock protein 90 family. Homodimer.

It is found in the cytoplasm. Its function is as follows. Molecular chaperone. Has ATPase activity. This Verminephrobacter eiseniae (strain EF01-2) protein is Chaperone protein HtpG.